The sequence spans 126 residues: Holo-[acyl-carrier-protein] synthase (126 aa).

Mg(2+)-binding residues include Asp-8 and Glu-57.

This sequence belongs to the P-Pant transferase superfamily. AcpS family. It depends on Mg(2+) as a cofactor.

Its subcellular location is the cytoplasm. It catalyses the reaction apo-[ACP] + CoA = holo-[ACP] + adenosine 3',5'-bisphosphate + H(+). Its function is as follows. Transfers the 4'-phosphopantetheine moiety from coenzyme A to a Ser of acyl-carrier-protein. This Geobacter metallireducens (strain ATCC 53774 / DSM 7210 / GS-15) protein is Holo-[acyl-carrier-protein] synthase.